A 361-amino-acid chain; its full sequence is T-box-containing protein TBX6L (361 aa).

Residues 36-209 constitute a DNA-binding region (T-box); that stretch reads LWMKFHQIGT…NNPFAKGFRE (174 aa). Disordered regions lie at residues 203–259 and 280–323; these read FAKG…VKEE and HAFP…QLPS. 2 stretches are compositionally biased toward basic and acidic residues: residues 206–220 and 234–259; these read GFRE…EGRA and KLPE…VKEE. The segment covering 280 to 290 has biased composition (low complexity); sequence HAFPAASPAPA.

It is found in the nucleus. In terms of biological role, may be involved in regulating somitogenesis. The protein is T-box-containing protein TBX6L (TBX6L) of Gallus gallus (Chicken).